We begin with the raw amino-acid sequence, 200 residues long: Large ribosomal subunit protein uL22c (200 aa).

It belongs to the universal ribosomal protein uL22 family. In terms of assembly, part of the 50S ribosomal subunit.

The protein localises to the plastid. The protein resides in the chloroplast. This protein binds specifically to 23S rRNA. Functionally, the globular domain of the protein is located near the polypeptide exit tunnel on the outside of the subunit, while an extended beta-hairpin is found that lines the wall of the exit tunnel in the center of the 70S ribosome. The polypeptide is Large ribosomal subunit protein uL22c (rpl22) (Medicago sativa (Alfalfa)).